The chain runs to 887 residues: Alanine--tRNA ligase (887 aa).

Residues histidine 564, histidine 568, cysteine 676, and histidine 680 each contribute to the Zn(2+) site.

It belongs to the class-II aminoacyl-tRNA synthetase family. Zn(2+) serves as cofactor.

Its subcellular location is the cytoplasm. It carries out the reaction tRNA(Ala) + L-alanine + ATP = L-alanyl-tRNA(Ala) + AMP + diphosphate. Its function is as follows. Catalyzes the attachment of alanine to tRNA(Ala) in a two-step reaction: alanine is first activated by ATP to form Ala-AMP and then transferred to the acceptor end of tRNA(Ala). Also edits incorrectly charged Ser-tRNA(Ala) and Gly-tRNA(Ala) via its editing domain. The protein is Alanine--tRNA ligase of Sinorhizobium medicae (strain WSM419) (Ensifer medicae).